Consider the following 1574-residue polypeptide: Disco-interacting protein 2 homolog B (1574 aa).

A phosphoserine mark is found at serine 9, serine 50, and serine 53. The DMAP1-binding domain occupies 12 to 130 (AVAALPPEVR…PMPTKRRSTF (119 aa)). Positions 31–166 (LSEGDITQKG…AALSAALQQS (136 aa)) are disordered. Over residues 52 to 62 (YSPQTQETDSI) the composition is skewed to polar residues. Residues 69 to 82 (QTPAPTAAQTSAPS) are compositionally biased toward low complexity. Threonine 70 carries the phosphothreonine modification. Positions 91 to 103 (GARDERYRSDIHT) are enriched in basic and acidic residues. Residue serine 99 is modified to Phosphoserine. The residue at position 139 (threonine 139) is a Phosphothreonine. 3 positions are modified to phosphoserine: serine 145, serine 147, and serine 152. The span at 154–166 (RRQAALSAALQQS) shows a compositional bias: low complexity. Phosphoserine is present on residues serine 177, serine 192, and serine 202. A disordered region spans residues 178–200 (IQGSSTSSSASSTLSHGEVKGTS). A compositionally biased stretch (low complexity) spans 181-192 (SSTSSSASSTLS). Residues 217–244 (APPDVTATTSSSSSSLRPANIDLPPSGI) are disordered. The residue at position 256 (serine 256) is a Phosphoserine.

It belongs to the DIP2 family. As to quaternary structure, interacts with alpha-tubulin. Highly expressed in brain and spinal cord (at protein level). In brain, expression is detected in the main olfactory bulb, cortex, lateral ventricle, cornu ammonis 1, cornu ammonis 3, dentate gyrus, striatum, cerebellar cortex and medial habenula. Expressed primarily in neurons including excitatory pyramidal neurons and inhibitory interneurons.

It localises to the cell projection. It is found in the dendrite. The protein resides in the axon. The protein localises to the perikaryon. In terms of biological role, negatively regulates axonal outgrowth and is essential for normal synaptic transmission. Not required for regulation of axon polarity. Promotes acetylation of alpha-tubulin. This is Disco-interacting protein 2 homolog B (Dip2b) from Mus musculus (Mouse).